The sequence spans 159 residues: 6,7-dimethyl-8-ribityllumazine synthase (159 aa).

5-amino-6-(D-ribitylamino)uracil is bound by residues Phe23, 61–63 (SFE), and 85–87 (AVI). Residue 90 to 91 (DT) coordinates (2S)-2-hydroxy-3-oxobutyl phosphate. His93 acts as the Proton donor in catalysis. Residue Phe118 participates in 5-amino-6-(D-ribitylamino)uracil binding. Arg132 contributes to the (2S)-2-hydroxy-3-oxobutyl phosphate binding site.

This sequence belongs to the DMRL synthase family.

The enzyme catalyses (2S)-2-hydroxy-3-oxobutyl phosphate + 5-amino-6-(D-ribitylamino)uracil = 6,7-dimethyl-8-(1-D-ribityl)lumazine + phosphate + 2 H2O + H(+). Its pathway is cofactor biosynthesis; riboflavin biosynthesis; riboflavin from 2-hydroxy-3-oxobutyl phosphate and 5-amino-6-(D-ribitylamino)uracil: step 1/2. Functionally, catalyzes the formation of 6,7-dimethyl-8-ribityllumazine by condensation of 5-amino-6-(D-ribitylamino)uracil with 3,4-dihydroxy-2-butanone 4-phosphate. This is the penultimate step in the biosynthesis of riboflavin. The sequence is that of 6,7-dimethyl-8-ribityllumazine synthase from Synechococcus sp. (strain RCC307).